A 380-amino-acid polypeptide reads, in one-letter code: Cytochrome b (380 aa).

Helical transmembrane passes span 34 to 54 (FGSLLGICLITQILTGLLLAM), 78 to 99 (WLIRNLHANGASFFFICIYFHI), 114 to 134 (WNTGIILLLTLMATAFVGYVL), and 179 to 199 (FFALHFLLPFMITGLTLIHLT). The heme b site is built by H84 and H98. Heme b contacts are provided by H183 and H197. H202 contacts a ubiquinone. Transmembrane regions (helical) follow at residues 227 to 247 (TKDILGFALMLLPLTTLALFS), 289 to 309 (LGGVLALAASVLILFLSPLLH), 321 to 341 (LSQLLFWTLVANLLILTWIGS), and 348 to 368 (FIIIGQLASTTYFIILLILFP).

It belongs to the cytochrome b family. As to quaternary structure, the cytochrome bc1 complex contains 11 subunits: 3 respiratory subunits (MT-CYB, CYC1 and UQCRFS1), 2 core proteins (UQCRC1 and UQCRC2) and 6 low-molecular weight proteins (UQCRH/QCR6, UQCRB/QCR7, UQCRQ/QCR8, UQCR10/QCR9, UQCR11/QCR10 and a cleavage product of UQCRFS1). This cytochrome bc1 complex then forms a dimer. Requires heme b as cofactor.

It is found in the mitochondrion inner membrane. Functionally, component of the ubiquinol-cytochrome c reductase complex (complex III or cytochrome b-c1 complex) that is part of the mitochondrial respiratory chain. The b-c1 complex mediates electron transfer from ubiquinol to cytochrome c. Contributes to the generation of a proton gradient across the mitochondrial membrane that is then used for ATP synthesis. The chain is Cytochrome b (MT-CYB) from Pygoscelis papua (Gentoo penguin).